A 212-amino-acid polypeptide reads, in one-letter code: RNA chaperone ProQ (212 aa).

A disordered region spans residues Gln107–Val153. Residues Gln117 to Lys126 are compositionally biased toward low complexity. Over residues Thr127–Lys141 the composition is skewed to basic residues.

Belongs to the ProQ family.

Its subcellular location is the cytoplasm. In terms of biological role, RNA chaperone with significant RNA binding, RNA strand exchange and RNA duplexing activities. The chain is RNA chaperone ProQ from Shewanella pealeana (strain ATCC 700345 / ANG-SQ1).